The sequence spans 431 residues: UDP-N-acetylglucosamine 1-carboxyvinyltransferase (431 aa).

25 to 26 is a binding site for phosphoenolpyruvate; that stretch reads KN. Residue Arg-101 coordinates UDP-N-acetyl-alpha-D-glucosamine. The active-site Proton donor is the Cys-125. At Cys-125 the chain carries 2-(S-cysteinyl)pyruvic acid O-phosphothioketal. Residues Asp-317 and Ile-339 each coordinate UDP-N-acetyl-alpha-D-glucosamine.

The protein belongs to the EPSP synthase family. MurA subfamily.

It is found in the cytoplasm. It catalyses the reaction phosphoenolpyruvate + UDP-N-acetyl-alpha-D-glucosamine = UDP-N-acetyl-3-O-(1-carboxyvinyl)-alpha-D-glucosamine + phosphate. It participates in cell wall biogenesis; peptidoglycan biosynthesis. Functionally, cell wall formation. Adds enolpyruvyl to UDP-N-acetylglucosamine. The protein is UDP-N-acetylglucosamine 1-carboxyvinyltransferase of Thermobifida fusca (strain YX).